A 528-amino-acid polypeptide reads, in one-letter code: G patch domain-containing protein 2 (528 aa).

The segment at 36–119 (LEESSEQARG…NKKDHSDSDD (84 aa)) is disordered. Residues 63-77 (RQARKRRGRKRRSYN) are compositionally biased toward basic residues. A compositionally biased stretch (basic and acidic residues) spans 98 to 117 (EPSKDYRENHNNNKKDHSDS). Phosphoserine occurs at positions 115, 117, 146, and 195. Disordered stretches follow at residues 232–282 (SEET…GDDE) and 487–528 (GRDG…GKSA). The segment covering 239-252 (NKDKMECEEQKVSD) has biased composition (basic and acidic residues). The G-patch domain occupies 467-513 (ENNIGNRMLQNMGWTPGSGLGRDGKGISEPIQAMQRPKGLGLGFPLP). Positions 514–528 (KSTSATTTPNAGKSA) are enriched in polar residues.

As to quaternary structure, interacts with DHX15. In terms of tissue distribution, testis.

It localises to the nucleus speckle. The protein localises to the nucleus. The protein resides in the nucleolus. Its function is as follows. Enhances the ATPase activity of DHX15 in vitro. This Homo sapiens (Human) protein is G patch domain-containing protein 2 (GPATCH2).